Consider the following 548-residue polypeptide: ADP,ATP carrier protein 1 (548 aa).

Transmembrane regions (helical) follow at residues 39 to 59 and 75 to 95; these read RPVF…YSVS and SIPY…VFSI. Asn101 carries an N-linked (GlcNAc...) asparagine glycan. The next 8 membrane-spanning stretches (helical) occupy residues 107–127, 149–169, 171–191, 204–224, 239–259, 302–322, 350–370, and 374–394; these read VFSI…TVLM, MVFM…SWTS, LMYL…FFAL, FIPL…FSMK, LFFR…IYLI, LVLA…MVEA, IQLA…PALI, and GFLY…ASVF. Asn400 and Asn406 each carry an N-linked (GlcNAc...) asparagine glycan. The helical transmembrane segment at 410 to 430 threads the bilayer; it reads LGFVSIGENLWLEQLLGAIIV. N-linked (GlcNAc...) asparagine glycosylation occurs at Asn488. Residues 494–514 traverse the membrane as a helical segment; that stretch reads KAAISSLTIVTVITACWGFAV.

The protein belongs to the ADP/ATP translocase tlc family.

Its subcellular location is the cell membrane. Its function is as follows. ATP transporter involved in the uptake of ATP from the host cell cytoplasm. Provides the microsporidian cell with host ATP in exchange for ADP. This is an obligate exchange system. This energy acquiring activity is an important component of microsporidian parasitism. The protein is ADP,ATP carrier protein 1 (ANC1) of Paranosema grylli (Microsporidian parasite).